A 244-amino-acid chain; its full sequence is Putative lipoprotein LprA (244 aa).

Residues 1–24 (MKHPPCSVVAAATAILAVVLAIGG) form the signal peptide. C25 carries the N-palmitoyl cysteine lipid modification. The S-diacylglycerol cysteine moiety is linked to residue C25.

This sequence belongs to the LppX/LprAFG lipoprotein family.

The protein localises to the cell membrane. The polypeptide is Putative lipoprotein LprA (lprA) (Mycobacterium tuberculosis (strain CDC 1551 / Oshkosh)).